Here is a 248-residue protein sequence, read N- to C-terminus: Probable transcriptional regulatory protein Pcar_2335 (248 aa).

The protein belongs to the TACO1 family.

Its subcellular location is the cytoplasm. This chain is Probable transcriptional regulatory protein Pcar_2335, found in Syntrophotalea carbinolica (strain DSM 2380 / NBRC 103641 / GraBd1) (Pelobacter carbinolicus).